We begin with the raw amino-acid sequence, 318 residues long: Ribosomal lysine N-methyltransferase 5 (318 aa).

S-adenosyl-L-methionine is bound by residues Trp95, 139–141 (GSG), Asp161, Trp214, and Met241.

It belongs to the class I-like SAM-binding methyltransferase superfamily. RKM5 family.

S-adenosyl-L-methionine-dependent protein-lysine N-methyltransferase that methylates 60S ribosomal protein L1. The sequence is that of Ribosomal lysine N-methyltransferase 5 (RKM5) from Zygosaccharomyces rouxii (strain ATCC 2623 / CBS 732 / NBRC 1130 / NCYC 568 / NRRL Y-229).